A 374-amino-acid polypeptide reads, in one-letter code: SH2 domain-containing protein 2A (374 aa).

The SH2 domain maps to 116-207 (WFHGFITRRE…PYGEILTQPL (92 aa)). A disordered region spans residues 213–232 (EPAGLSLRADSDSGSKRQDP). Positions 221 to 232 (ADSDSGSKRQDP) are enriched in basic and acidic residues. Residue S237 is modified to Phosphoserine. The disordered stretch occupies residues 241–301 (QQGQAQASGH…QAPPINPIYQ (61 aa)). Residues 256-266 (ASQQKATSQAS) show a composition bias toward polar residues. The short motif at 267-273 (RPRPPIP) is the SH3-binding element. Pro residues predominate over residues 268–279 (PRPPIPAKPQLP). S316 carries the phosphoserine modification. Disordered stretches follow at residues 321–340 (PSNI…IGHP) and 353–374 (GQVR…GSPS).

As to quaternary structure, interacts with KDR. Interacts with p56-LCK, TXK and ITK. Post-translationally, phosphorylated on tyrosine residues upon TCR-stimulation. As to expression, expression limited to tissues of the immune system and, in particular, activated T-cells and natural killer cells. Expressed in the thymus, lymph node, and to a lesser extent, in the spleen and bone marrow. According to PubMed:10553045, also expressed in the lung.

It localises to the cytoplasm. It is found in the cell membrane. In terms of biological role, could be a T-cell-specific adapter protein involved in the control of T-cell activation. May play a role in p56-LCK-mediated T-cell signaling. Could be involved in the regulation of responses to T-cell activation stimuli, specifically proliferation and lymphokine production. Interactions with ITK and TXK may provide important biochemical links of these two important kinases with other components in the T-cell activation machinery. The sequence is that of SH2 domain-containing protein 2A (Sh2d2a) from Mus musculus (Mouse).